We begin with the raw amino-acid sequence, 142 residues long: Hemoglobin subunit alpha (142 aa).

The Globin domain maps to 1 to 142 (GLTAADKTLI…VEKALFETYR (142 aa)). Residue His59 coordinates O2. Residue His88 participates in heme b binding.

Belongs to the globin family. As to quaternary structure, heterotetramer of two alpha chains and two beta chains (an easy dimerization is also reported). Red blood cells.

Its function is as follows. Involved in oxygen transport from the lung to the various peripheral tissues. The polypeptide is Hemoglobin subunit alpha (HBA) (Latimeria chalumnae (Coelacanth)).